We begin with the raw amino-acid sequence, 141 residues long: Large ribosomal subunit protein uL11 (141 aa).

Belongs to the universal ribosomal protein uL11 family. As to quaternary structure, part of the ribosomal stalk of the 50S ribosomal subunit. Interacts with L10 and the large rRNA to form the base of the stalk. L10 forms an elongated spine to which L12 dimers bind in a sequential fashion forming a multimeric L10(L12)X complex. In terms of processing, one or more lysine residues are methylated.

Functionally, forms part of the ribosomal stalk which helps the ribosome interact with GTP-bound translation factors. The sequence is that of Large ribosomal subunit protein uL11 from Synechococcus sp. (strain CC9311).